We begin with the raw amino-acid sequence, 554 residues long: Arginine--tRNA ligase (554 aa).

The short motif at 132–142 is the 'HIGH' region element; that stretch reads ANPTGPLHIGH.

It belongs to the class-I aminoacyl-tRNA synthetase family. Monomer.

It localises to the cytoplasm. It catalyses the reaction tRNA(Arg) + L-arginine + ATP = L-arginyl-tRNA(Arg) + AMP + diphosphate. The sequence is that of Arginine--tRNA ligase from Pseudarthrobacter chlorophenolicus (strain ATCC 700700 / DSM 12829 / CIP 107037 / JCM 12360 / KCTC 9906 / NCIMB 13794 / A6) (Arthrobacter chlorophenolicus).